The sequence spans 1224 residues: DNA-directed RNA polymerase subunit beta'' (1224 aa).

4 residues coordinate Zn(2+): Cys223, Cys297, Cys304, and Cys307.

The protein belongs to the RNA polymerase beta' chain family. RpoC2 subfamily. In terms of assembly, in plastids the minimal PEP RNA polymerase catalytic core is composed of four subunits: alpha, beta, beta', and beta''. When a (nuclear-encoded) sigma factor is associated with the core the holoenzyme is formed, which can initiate transcription. Zn(2+) is required as a cofactor.

Its subcellular location is the plastid. The protein localises to the chloroplast. The enzyme catalyses RNA(n) + a ribonucleoside 5'-triphosphate = RNA(n+1) + diphosphate. Its function is as follows. DNA-dependent RNA polymerase catalyzes the transcription of DNA into RNA using the four ribonucleoside triphosphates as substrates. The chain is DNA-directed RNA polymerase subunit beta'' from Porphyra purpurea (Red seaweed).